A 197-amino-acid chain; its full sequence is GTP cyclohydrolase-2 (197 aa).

50–54 (RIHSE) is a binding site for GTP. Residues Cys55, Cys66, and Cys68 each coordinate Zn(2+). GTP contacts are provided by residues Gln71, 93 to 95 (EGR), and Thr115. The Proton acceptor role is filled by Asp127. The active-site Nucleophile is the Arg129. Residues Thr150 and Lys155 each coordinate GTP.

Belongs to the GTP cyclohydrolase II family. Requires Zn(2+) as cofactor.

The enzyme catalyses GTP + 4 H2O = 2,5-diamino-6-hydroxy-4-(5-phosphoribosylamino)-pyrimidine + formate + 2 phosphate + 3 H(+). It functions in the pathway cofactor biosynthesis; riboflavin biosynthesis; 5-amino-6-(D-ribitylamino)uracil from GTP: step 1/4. Its function is as follows. Catalyzes the conversion of GTP to 2,5-diamino-6-ribosylamino-4(3H)-pyrimidinone 5'-phosphate (DARP), formate and pyrophosphate. In Tolumonas auensis (strain DSM 9187 / NBRC 110442 / TA 4), this protein is GTP cyclohydrolase-2.